The chain runs to 415 residues: Adenylosuccinate synthetase (415 aa).

Residues glycine 12–lysine 18 and glycine 40–threonine 42 each bind GTP. Aspartate 13 functions as the Proton acceptor in the catalytic mechanism. Mg(2+) is bound by residues aspartate 13 and glycine 40. IMP contacts are provided by residues aspartate 13–lysine 16, asparagine 38–histidine 41, threonine 125, arginine 139, glutamine 219, threonine 234, and arginine 298. The active-site Proton donor is histidine 41. Threonine 294 to arginine 300 provides a ligand contact to substrate. Residues arginine 300, lysine 326–aspartate 328, and serine 404–glycine 406 contribute to the GTP site.

Belongs to the adenylosuccinate synthetase family. Homodimer. It depends on Mg(2+) as a cofactor.

Its subcellular location is the cytoplasm. It carries out the reaction IMP + L-aspartate + GTP = N(6)-(1,2-dicarboxyethyl)-AMP + GDP + phosphate + 2 H(+). It participates in purine metabolism; AMP biosynthesis via de novo pathway; AMP from IMP: step 1/2. In terms of biological role, plays an important role in the de novo pathway of purine nucleotide biosynthesis. Catalyzes the first committed step in the biosynthesis of AMP from IMP. The sequence is that of Adenylosuccinate synthetase from Wolinella succinogenes (strain ATCC 29543 / DSM 1740 / CCUG 13145 / JCM 31913 / LMG 7466 / NCTC 11488 / FDC 602W) (Vibrio succinogenes).